A 172-amino-acid polypeptide reads, in one-letter code: Large ribosomal subunit protein bL9 (172 aa).

It belongs to the bacterial ribosomal protein bL9 family.

Functionally, binds to the 23S rRNA. The protein is Large ribosomal subunit protein bL9 of Chlamydia caviae (strain ATCC VR-813 / DSM 19441 / 03DC25 / GPIC) (Chlamydophila caviae).